The primary structure comprises 199 residues: Protein PPP1R35 homolog (199 aa).

Basic residues predominate over residues 1-11 (MPHKRRNRVHA). Disordered stretches follow at residues 1–23 (MPHK…RVSV) and 36–60 (ESCN…AMTN). Over residues 38–49 (CNGSHADNSSPD) the composition is skewed to polar residues.

Belongs to the PPP1R35 family. As to quaternary structure, interacts with Ana3; this complex is recruited to daughter centrioles before their conversion to centrosomes.

Its subcellular location is the cytoplasm. It is found in the cytoskeleton. The protein localises to the microtubule organizing center. The protein resides in the centrosome. It localises to the centriole. Functionally, participates in the later stages of centriole assembly through the interaction with Ana3 leading to the centriole to centrosome conversion in somatic cells. This Drosophila melanogaster (Fruit fly) protein is Protein PPP1R35 homolog.